Consider the following 460-residue polypeptide: UDP-N-acetylmuramoylalanine--D-glutamate ligase (460 aa).

Position 120–126 (120–126 (GSNGKTT)) interacts with ATP.

This sequence belongs to the MurCDEF family.

The protein resides in the cytoplasm. The enzyme catalyses UDP-N-acetyl-alpha-D-muramoyl-L-alanine + D-glutamate + ATP = UDP-N-acetyl-alpha-D-muramoyl-L-alanyl-D-glutamate + ADP + phosphate + H(+). It participates in cell wall biogenesis; peptidoglycan biosynthesis. Functionally, cell wall formation. Catalyzes the addition of glutamate to the nucleotide precursor UDP-N-acetylmuramoyl-L-alanine (UMA). The polypeptide is UDP-N-acetylmuramoylalanine--D-glutamate ligase (Lactobacillus gasseri (strain ATCC 33323 / DSM 20243 / BCRC 14619 / CIP 102991 / JCM 1131 / KCTC 3163 / NCIMB 11718 / NCTC 13722 / AM63)).